The primary structure comprises 76 residues: Small ribosomal subunit protein bS18 (76 aa).

This sequence belongs to the bacterial ribosomal protein bS18 family. In terms of assembly, part of the 30S ribosomal subunit. Forms a tight heterodimer with protein bS6.

Binds as a heterodimer with protein bS6 to the central domain of the 16S rRNA, where it helps stabilize the platform of the 30S subunit. This chain is Small ribosomal subunit protein bS18, found in Alkaliphilus metalliredigens (strain QYMF).